We begin with the raw amino-acid sequence, 925 residues long: Neuronal PAS domain-containing protein 3 (925 aa).

The bHLH domain maps to 58 to 111 (LRKEKSRDAARSRRGKENFEFYELAKLLPLPAAITSQLDKASIIRLTISYLKMR). The segment at 60–71 (KEKSRDAARSRR) is DNA-binding. Disordered regions lie at residues 119–138 (PPWN…KGAQ) and 219–257 (LPPG…SPSL). Residues 152–222 (EAHLGSHILQ…EQLGMKLPPG (71 aa)) form the PAS 1 domain. The span at 234–256 (AASSASSSSQSETPEPVETTSPS) shows a compositional bias: low complexity. Positions 324–394 (PPPTINEVRI…HSHLDLLNKG (71 aa)) constitute a PAS 2 domain. The PAC domain maps to 398–441 (TKYYRWMQKNGGYIWIQSSATIAINAKNANEKNIIWVNYLLSNP). 3 disordered regions span residues 457-555 (PEKA…FGAL), 576-645 (PCES…SSPH), and 664-774 (NESS…GASN). 2 stretches are compositionally biased toward basic and acidic residues: residues 484-493 (ENSKSDEKGN) and 529-549 (DSRD…KAAE). Basic residues predominate over residues 601–622 (KHQKRKRRRKRQKGGSASRRRL). The segment covering 680 to 690 (NESPYSMTKPP) has biased composition (polar residues). 2 stretches are compositionally biased toward gly residues: residues 700 to 710 (GQGGSIGGGGA) and 760 to 771 (GGGAGSGGGGPG).

As to quaternary structure, efficient DNA binding requires dimerization with another bHLH protein. Interacts with ARNT; forms a heterodimer that binds core DNA sequence 5'-[AG]CGTG-3' within the hypoxia response element (HRE) of target gene promoters. Detected exclusively in adult brain in inhibitory interneurons.

It is found in the nucleus. In terms of biological role, may play a broad role in neurogenesis. May control regulatory pathways relevant to schizophrenia and to psychotic illness. The sequence is that of Neuronal PAS domain-containing protein 3 (Npas3) from Mus musculus (Mouse).